A 484-amino-acid polypeptide reads, in one-letter code: Mitochondrial metal transporter 2 (484 aa).

The N-terminal 56 residues, 1-56 (MLRISIDSIKQFGSFVPGYNNTSYHAAGRAIRTSSLYSTMISANPRRCLHSSKLLN), are a transit peptide targeting the mitochondrion. The span at 73–82 (SSQNGSNSRQ) shows a compositional bias: polar residues. The disordered stretch occupies residues 73 to 114 (SSQNGSNSRQNESEGKKEGKASSVKSLLQHTHSHSHTHMHDN). Residues 83–92 (NESEGKKEGK) show a composition bias toward basic and acidic residues. 5 consecutive transmembrane segments (helical) span residues 132-152 (ITWI…VGGI), 158-178 (ALLA…LTLF), 209-229 (ILAM…VGPV), 256-276 (ATNV…EWVF), and 316-336 (YFFN…GLII). The disordered stretch occupies residues 453–484 (DSKGDLEHSHDTKSTNHTHTHSDSADTHTHKH).

Belongs to the cation diffusion facilitator (CDF) transporter (TC 2.A.4) family. SLC30A subfamily.

It is found in the mitochondrion membrane. Mitochondrial metal transporter involved in mitochondrial iron accumulation. The sequence is that of Mitochondrial metal transporter 2 (MMT2) from Saccharomyces cerevisiae (strain ATCC 204508 / S288c) (Baker's yeast).